The chain runs to 149 residues: Transcriptional repressor NrdR (149 aa).

A zinc finger lies at C3–C34. The ATP-cone domain maps to P49–E139.

It belongs to the NrdR family. Zn(2+) is required as a cofactor.

Functionally, negatively regulates transcription of bacterial ribonucleotide reductase nrd genes and operons by binding to NrdR-boxes. In Shewanella putrefaciens (strain CN-32 / ATCC BAA-453), this protein is Transcriptional repressor NrdR.